The primary structure comprises 1506 residues: Condensin-2 complex subunit D3 (1506 aa).

Positions 154-194 (SNLTQKRKKDHSKSSKDNYRKSRKRGKPPRKEDYQVDELSR) are disordered. HEAT repeat units lie at residues 442-476 (HKFF…LELS), 532-567 (PGER…LKHC), and 574-605 (QDLL…VMAQ). Phosphoserine is present on Ser562. The span at 884–897 (SDHLPSSQGTTDAL) shows a compositional bias: polar residues. The interval 884-908 (SDHLPSSQGTTDALDSQPPFQPRSS) is disordered. The HEAT 4 repeat unit spans residues 968-1004 (TVMVDNYIPNISVCLKDSDPFIRKQTLVLLTNLLQEE). The stretch at 1213-1270 (ALRELMNYLREVMQDYRDEINDFFAVDKQLASELEYDMKKYNEQLAQEQALTEHANAT) forms a coiled coil. The interval 1317 to 1353 (QDNADVPPTQSRPSAPRSNFTPTLPPISENGPLKIMS) is disordered. Residues 1324–1338 (PTQSRPSAPRSNFTP) are compositionally biased toward polar residues. Phosphoserine is present on residues Ser1359, Ser1368, Ser1381, and Ser1393. Disordered stretches follow at residues 1385-1412 (LPFN…ESDR) and 1473-1506 (PQSP…KTAN). Low complexity predominate over residues 1393–1405 (SPENPSSHESSLS). The segment covering 1492–1506 (SSRRSLRKAPLKTAN) has biased composition (basic residues).

Component of the condensin-2 complex, which contains the SMC2 and SMC4 heterodimer, and 3 non SMC subunits that probably regulate the complex: NCAPH2, NCAPD3 and NCAPG2.

The protein resides in the nucleus. Regulatory subunit of the condensin-2 complex, a complex which establishes mitotic chromosome architecture and is involved in physical rigidity of the chromatid axis. May promote the resolution of double-strand DNA catenanes (intertwines) between sister chromatids. Condensin-mediated compaction likely increases tension in catenated sister chromatids, providing directionality for type II topoisomerase-mediated strand exchanges toward chromatid decatenation. Specifically required for decatenation of centromeric ultrafine DNA bridges during anaphase. Early in neurogenesis, may play an essential role to ensure accurate mitotic chromosome condensation in neuron stem cells, ultimately affecting neuron pool and cortex size. This Mus musculus (Mouse) protein is Condensin-2 complex subunit D3 (Ncapd3).